A 96-amino-acid polypeptide reads, in one-letter code: Small ribosomal subunit protein bS6 (96 aa).

The protein belongs to the bacterial ribosomal protein bS6 family.

Functionally, binds together with bS18 to 16S ribosomal RNA. The polypeptide is Small ribosomal subunit protein bS6 (Streptococcus mutans serotype c (strain ATCC 700610 / UA159)).